The chain runs to 222 residues: L-serine dehydratase, beta chain (222 aa).

The region spanning threonine 150 to valine 222 is the ACT domain.

Belongs to the iron-sulfur dependent L-serine dehydratase family. As to quaternary structure, heterooctamer of four alpha chains and four beta chains. It depends on [4Fe-4S] cluster as a cofactor.

It carries out the reaction L-serine = pyruvate + NH4(+). Its pathway is carbohydrate biosynthesis; gluconeogenesis. In Peptoniphilus asaccharolyticus (Peptostreptococcus asaccharolyticus), this protein is L-serine dehydratase, beta chain (sdhB).